Reading from the N-terminus, the 661-residue chain is COBRA-like protein 7 (661 aa).

A signal peptide spans 1–26; that stretch reads MDSAPNFIPRLLLLSLLIVSIPLTSS. Residues 26 to 45 form a disordered region; the sequence is SQSDANTTNPSPSPPSDSDL. 14 N-linked (GlcNAc...) asparagine glycosylation sites follow: asparagine 31, asparagine 64, asparagine 122, asparagine 170, asparagine 314, asparagine 327, asparagine 356, asparagine 369, asparagine 398, asparagine 410, asparagine 430, asparagine 472, asparagine 551, and asparagine 561. The GPI-anchor amidated serine moiety is linked to residue serine 637. A propeptide spans 638-661 (removed in mature form); the sequence is SQHRKHISVFLLALPVLALLILRA.

Belongs to the COBRA family. In terms of tissue distribution, expressed in roots, stems, leaves, flowers and siliques.

Its subcellular location is the cell membrane. The sequence is that of COBRA-like protein 7 (COBL7) from Arabidopsis thaliana (Mouse-ear cress).